A 179-amino-acid polypeptide reads, in one-letter code: Large ribosomal subunit protein uL6 (179 aa).

This sequence belongs to the universal ribosomal protein uL6 family. In terms of assembly, part of the 50S ribosomal subunit.

In terms of biological role, this protein binds to the 23S rRNA, and is important in its secondary structure. It is located near the subunit interface in the base of the L7/L12 stalk, and near the tRNA binding site of the peptidyltransferase center. The chain is Large ribosomal subunit protein uL6 from Syntrophus aciditrophicus (strain SB).